The sequence spans 367 residues: Glutamate 5-kinase (367 aa).

K8 contacts ATP. Substrate contacts are provided by S49, D136, and N148. ATP-binding positions include 168-169 (TD) and 210-216 (TGGMATK). One can recognise a PUA domain in the interval 275–353 (TGKLYLDRGA…EEIPTILGYS (79 aa)).

The protein belongs to the glutamate 5-kinase family.

It is found in the cytoplasm. It catalyses the reaction L-glutamate + ATP = L-glutamyl 5-phosphate + ADP. Its pathway is amino-acid biosynthesis; L-proline biosynthesis; L-glutamate 5-semialdehyde from L-glutamate: step 1/2. Its function is as follows. Catalyzes the transfer of a phosphate group to glutamate to form L-glutamate 5-phosphate. The sequence is that of Glutamate 5-kinase from Cyanothece sp. (strain PCC 7425 / ATCC 29141).